The following is a 525-amino-acid chain: Mitogen-activated protein kinase kinase 5 (525 aa).

Positions 59–317 constitute a Protein kinase domain; that stretch reads ETEGGFLGKG…CTELLRHPFI (259 aa). Residues 65–73 and K88 each bind ATP; that span reads LGKGSSGSV. The active-site Proton acceptor is the D178. Low complexity predominate over residues 358–367; it reads SALPLASEGG. Disordered stretches follow at residues 358–392 and 438–468; these read SALP…ERHD and SASV…AQHR.

This sequence belongs to the protein kinase superfamily. STE Ser/Thr protein kinase family. MAP kinase kinase subfamily. The cofactor is Mg(2+).

The enzyme catalyses L-tyrosyl-[protein] + ATP = O-phospho-L-tyrosyl-[protein] + ADP + H(+). It catalyses the reaction L-seryl-[protein] + ATP = O-phospho-L-seryl-[protein] + ADP + H(+). It carries out the reaction L-threonyl-[protein] + ATP = O-phospho-L-threonyl-[protein] + ADP + H(+). Its function is as follows. Protein kinase which phosphorylates and activates MPK4 in vitro. This is Mitogen-activated protein kinase kinase 5 from Leishmania mexicana.